The sequence spans 856 residues: Inactive rhomboid protein 2 (856 aa).

The disordered stretch occupies residues 1–115; it reads MASADKNGGS…PGFRRQASLS (115 aa). Topologically, residues 1–409 are cytoplasmic; that stretch reads MASADKNGGS…HRPYFTYWLT (409 aa). Ser90 is subject to Phosphoserine. The span at 94–106 shows a compositional bias: basic and acidic residues; that stretch reads PRSRWQESSEKRP. Phosphoserine occurs at positions 113 and 117. Residues 165–184 form a disordered region; the sequence is PSQEAPSFQGTESPKPCKMP. The segment at 191-271 is involved in interaction with FRMD8; sequence ARGRAFRHPE…GQRCRVVKRS (81 aa). Phosphoserine occurs at positions 323, 325, and 328. Residues 410 to 430 traverse the membrane as a helical segment; the sequence is FVHVIITLLVICTYGIAPVGF. Topologically, residues 431–660 are lumenal; the sequence is AQHVTTQLVL…PDQFYRLWLS (230 aa). Positions 531 to 553 are disordered; sequence GPPMDKSDLGQKRTSGAVCHQDP. A helical membrane pass occupies residues 661 to 681; the sequence is LFLHAGVVHCLVSVVFQMTIL. The Cytoplasmic segment spans residues 682-692; that stretch reads RDLEKLAGWHR. A helical membrane pass occupies residues 693 to 713; that stretch reads IAIIFILSGITGNLASAIFLP. The Lumenal segment spans residues 714-715; sequence YR. Residues 716 to 736 form a helical membrane-spanning segment; sequence AEVGPAGSQFGLLACLFVELF. Topologically, residues 737–747 are cytoplasmic; the sequence is QSWPLLERPWK. Residues 748–768 form a helical membrane-spanning segment; it reads AFLNLSAIVLFLFICGLLPWI. At 769 to 773 the chain is on the lumenal side; the sequence is DNIAH. Residues 774–794 form a helical membrane-spanning segment; the sequence is IFGFLSGLLLAFAFLPYITFG. Topologically, residues 795–802 are cytoplasmic; it reads TSDKYRKR. A helical transmembrane segment spans residues 803-823; the sequence is ALILVSLLAFAGLFAALVLWL. Over 824–856 the chain is Lumenal; it reads YIYPINWPWIEHLTCFPFTSRFCEKYELDQVLH.

The protein belongs to the peptidase S54 family. As to quaternary structure, interacts with EGF. Interacts (via cytoplasmic N-terminus) with FRMD8/iTAP; this interaction leads to mutual protein stabilization. Interacts with ADAM17/TACE. As to expression, found in the epidermis and esophageal epithelium.

It is found in the endoplasmic reticulum membrane. Its subcellular location is the cell membrane. Functionally, regulates ADAM17 protease, a sheddase of the epidermal growth factor (EGF) receptor ligands and TNF, thereby plays a role in sleep, cell survival, proliferation, migration and inflammation. Does not exhibit any protease activity on its own. The sequence is that of Inactive rhomboid protein 2 (RHBDF2) from Homo sapiens (Human).